We begin with the raw amino-acid sequence, 125 residues long: uncharacterized protein (125 aa).

4 consecutive transmembrane segments (helical) span residues 9 to 29 (IANAGALAVAVWLLDKITLTG), 33 to 53 (GEKTLTLIVVALVFGLVNMVV), 56 to 76 (IVQVLTFPLFILTLGLFTLVV), and 100 to 120 (FWTAVLGGLIVSIVSWALNAF).

It is found in the cell membrane. This is an uncharacterized protein from Streptomyces coelicolor (strain ATCC BAA-471 / A3(2) / M145).